We begin with the raw amino-acid sequence, 641 residues long: Choline O-acetyltransferase (641 aa).

Ser-17 is modified (phosphoserine). Catalysis depends on His-335, which acts as the Proton acceptor. Ser-366 bears the Phosphoserine mark. Residues 413–425 (GKTF…CSPD), Ser-451, and Gln-552 each bind CoA. The tract at residues 615–641 (CSSRQPADSKPPTAKERARGPSQAKQS) is disordered.

The protein belongs to the carnitine/choline acetyltransferase family.

The enzyme catalyses choline + acetyl-CoA = acetylcholine + CoA. In terms of biological role, catalyzes the reversible synthesis of acetylcholine (ACh) from acetyl CoA and choline at cholinergic synapses. The polypeptide is Choline O-acetyltransferase (Chat) (Mus musculus (Mouse)).